We begin with the raw amino-acid sequence, 70 residues long: DNA gyrase inhibitor YacG (70 aa).

Residues C20, C23, C35, and C39 each contribute to the Zn(2+) site.

Belongs to the DNA gyrase inhibitor YacG family. In terms of assembly, interacts with GyrB. The cofactor is Zn(2+).

In terms of biological role, inhibits all the catalytic activities of DNA gyrase by preventing its interaction with DNA. Acts by binding directly to the C-terminal domain of GyrB, which probably disrupts DNA binding by the gyrase. This chain is DNA gyrase inhibitor YacG, found in Rhizobium leguminosarum bv. trifolii (strain WSM2304).